Reading from the N-terminus, the 419-residue chain is Keratin, type II cytoskeletal I (419 aa).

The segment at 1 to 16 (KGSTKRANLDPLFEKY) is linker 1. Residues 1–275 (KGSTKRANLD…YMLEGEEGRM (275 aa)) form the IF rod domain. Residues 17-108 (ISDLKRYLDN…TLFAAELSQV (92 aa)) form a coil 1B region. The tract at residues 109–132 (HDQVTDTSVVLTMDNNRDLNLDSI) is linker 12. The segment at 133 to 271 (IKEVKCQYEQ…STYRYMLEGE (139 aa)) is coil 2. Residues 272–419 (EGRMSGQISN…STTSTTKRSY (148 aa)) are tail.

This sequence belongs to the intermediate filament family. As to quaternary structure, heterotetramer of two type I and two type II keratins.

The sequence is that of Keratin, type II cytoskeletal I from Xenopus laevis (African clawed frog).